An 80-amino-acid polypeptide reads, in one-letter code: Small ribosomal subunit protein uS17 (80 aa).

It belongs to the universal ribosomal protein uS17 family. As to quaternary structure, part of the 30S ribosomal subunit.

One of the primary rRNA binding proteins, it binds specifically to the 5'-end of 16S ribosomal RNA. This chain is Small ribosomal subunit protein uS17, found in Beijerinckia indica subsp. indica (strain ATCC 9039 / DSM 1715 / NCIMB 8712).